A 332-amino-acid chain; its full sequence is Small ribosomal subunit biogenesis GTPase RsgA (332 aa).

The 157-residue stretch at 103–259 (RQQLIAANLD…LIDTPGMREL (157 aa)) folds into the CP-type G domain. Residues 148–151 (TKVD) and 201–209 (GSSGAGKST) each bind GTP. 4 residues coordinate Zn(2+): Cys281, Cys286, His288, and Cys294.

The protein belongs to the TRAFAC class YlqF/YawG GTPase family. RsgA subfamily. Monomer. Associates with 30S ribosomal subunit, binds 16S rRNA. It depends on Zn(2+) as a cofactor.

The protein resides in the cytoplasm. Its function is as follows. One of several proteins that assist in the late maturation steps of the functional core of the 30S ribosomal subunit. Helps release RbfA from mature subunits. May play a role in the assembly of ribosomal proteins into the subunit. Circularly permuted GTPase that catalyzes slow GTP hydrolysis, GTPase activity is stimulated by the 30S ribosomal subunit. The protein is Small ribosomal subunit biogenesis GTPase RsgA of Xylella fastidiosa (strain M23).